A 548-amino-acid chain; its full sequence is mRNA cleavage and polyadenylation factor CLP1 (548 aa).

ATP-binding positions include glutamate 19, lysine 60, and 123-128; that span reads SSGKTT. Residues 437–481 are compositionally biased toward basic and acidic residues; that stretch reads ESEVKEEVKEEKNEKDGEIKQDGEGEKKGEGKGEGEGEGEGKYGE. Residues 437 to 500 are disordered; that stretch reads ESEVKEEVKE…DEEEVPFREE (64 aa). Over residues 482-494 the composition is skewed to acidic residues; that stretch reads EEGEAEGEDDEEE.

It belongs to the Clp1 family. Clp1 subfamily. In terms of assembly, component of a pre-mRNA cleavage factor complex. Interacts directly with PCF11.

It localises to the nucleus. Functionally, required for endonucleolytic cleavage during polyadenylation-dependent pre-mRNA 3'-end formation. The chain is mRNA cleavage and polyadenylation factor CLP1 from Cryptococcus neoformans var. neoformans serotype D (strain B-3501A) (Filobasidiella neoformans).